Reading from the N-terminus, the 602-residue chain is DNA mismatch repair protein MutL (602 aa).

This sequence belongs to the DNA mismatch repair MutL/HexB family.

Functionally, this protein is involved in the repair of mismatches in DNA. It is required for dam-dependent methyl-directed DNA mismatch repair. May act as a 'molecular matchmaker', a protein that promotes the formation of a stable complex between two or more DNA-binding proteins in an ATP-dependent manner without itself being part of a final effector complex. This Baumannia cicadellinicola subsp. Homalodisca coagulata protein is DNA mismatch repair protein MutL.